A 294-amino-acid chain; its full sequence is Shikimate dehydrogenase (NADP(+)) (294 aa).

Shikimate contacts are provided by residues 25–27 (SAS) and Thr72. The Proton acceptor role is filled by Lys76. Residues Asn97 and Asp112 each coordinate shikimate. Residues 136–140 (GAGGA) and Thr234 contribute to the NADP(+) site. Tyr236 provides a ligand contact to shikimate. An NADP(+)-binding site is contributed by Gly257.

This sequence belongs to the shikimate dehydrogenase family. As to quaternary structure, homodimer.

The catalysed reaction is shikimate + NADP(+) = 3-dehydroshikimate + NADPH + H(+). The protein operates within metabolic intermediate biosynthesis; chorismate biosynthesis; chorismate from D-erythrose 4-phosphate and phosphoenolpyruvate: step 4/7. Functionally, involved in the biosynthesis of the chorismate, which leads to the biosynthesis of aromatic amino acids. Catalyzes the reversible NADPH linked reduction of 3-dehydroshikimate (DHSA) to yield shikimate (SA). The protein is Shikimate dehydrogenase (NADP(+)) of Symbiobacterium thermophilum (strain DSM 24528 / JCM 14929 / IAM 14863 / T).